A 154-amino-acid chain; its full sequence is Urease subunit alpha (154 aa).

The Urease domain occupies Gly38–Ile154. His43, His45, and Lys126 together coordinate Ni(2+). Residue Lys126 is modified to N6-carboxylysine. Residue His128 participates in substrate binding.

This sequence belongs to the metallo-dependent hydrolases superfamily. Urease alpha subunit family. Heterotrimer of UreA (gamma), UreB (beta) and UreC (alpha) subunits. Three heterotrimers associate to form the active enzyme. Ni cation is required as a cofactor. Post-translationally, carboxylation allows a single lysine to coordinate two nickel ions.

Its subcellular location is the cytoplasm. It carries out the reaction urea + 2 H2O + H(+) = hydrogencarbonate + 2 NH4(+). Its pathway is nitrogen metabolism; urea degradation; CO(2) and NH(3) from urea (urease route): step 1/1. This Photobacterium damselae subsp. damselae (Listonella damsela) protein is Urease subunit alpha (ureC).